Here is a 529-residue protein sequence, read N- to C-terminus: Isoleucine--tRNA ligase (529 aa).

Residue glutamate 482 coordinates L-isoleucyl-5'-AMP. A 'KMSKS' region motif is present at residues 523 to 527; that stretch reads KMSKS. Lysine 526 serves as a coordination point for ATP.

This sequence belongs to the class-I aminoacyl-tRNA synthetase family. IleS type 1 subfamily. Monomer.

It is found in the cytoplasm. The enzyme catalyses tRNA(Ile) + L-isoleucine + ATP = L-isoleucyl-tRNA(Ile) + AMP + diphosphate. Functionally, catalyzes the attachment of isoleucine to tRNA(Ile). As IleRS can inadvertently accommodate and process structurally similar amino acids such as valine, to avoid such errors it has two additional distinct tRNA(Ile)-dependent editing activities. One activity is designated as 'pretransfer' editing and involves the hydrolysis of activated Val-AMP. The other activity is designated 'posttransfer' editing and involves deacylation of mischarged Val-tRNA(Ile). This chain is Isoleucine--tRNA ligase (ileS), found in Aquifex pyrophilus.